A 166-amino-acid polypeptide reads, in one-letter code: Protein E6 (166 aa).

2 zinc fingers span residues 50–86 and 123–159; these read CNFC…CRWC and CQNC…CRLC.

Belongs to the papillomaviridae E6 protein family. Forms homodimers. Interacts with ubiquitin-protein ligase UBE3A/E6-AP; this interaction stimulates UBE3A ubiquitin activity. Interacts with host BAK1.

It localises to the host cytoplasm. The protein localises to the host nucleus. Plays a major role in the induction and maintenance of cellular transformation. E6 associates with host UBE3A/E6-AP ubiquitin-protein ligase and modulates its activity. Protects host keratinocytes from apoptosis by mediating the degradation of host BAK1. May also inhibit host immune response. This Homo sapiens (Human) protein is Protein E6.